A 561-amino-acid chain; its full sequence is Shugoshin 1 (561 aa).

The interval 1-176 (MAKERCLKKS…DTLGVDFDSG (176 aa)) is necessary for interaction with PPP2CA and PPP2R1A. Residues 7–89 (LKKSFQDSLE…DIILQLRKEC (83 aa)) adopt a coiled-coil conformation. Ser14 is subject to Phosphoserine; by NEK2. Positions 192-200 (RSSLKKHCN) match the D-box 1 motif. At Ser256 the chain carries Phosphoserine. Disordered regions lie at residues 260 to 331 (IQPG…SVSS) and 348 to 441 (FRQK…HLSL). The span at 267–296 (KTKEDILESKSEQTKSKQRDTQERKREEKR) shows a compositional bias: basic and acidic residues. The stretch at 273–313 (LESKSEQTKSKQRDTQERKREEKRKANRRKSKRMSKYKENK) forms a coiled coil. Positions 297-307 (KANRRKSKRMS) are enriched in basic residues. Basic and acidic residues predominate over residues 308–318 (KYKENKSENKK). A KEN box motif is present at residues 310–312 (KEN). Low complexity predominate over residues 364 to 375 (SEVSLCESSGSG). Residues 388–398 (YIQNPTSNSDR) are compositionally biased toward polar residues. A compositionally biased stretch (basic and acidic residues) spans 410-421 (KYTDEKETEGSK). Residues 422-433 (PTKTPTTTPPET) show a composition bias toward low complexity. The residue at position 436 (Ser436) is a Phosphoserine. Positions 438–446 (HLSLKDITN) match the D-box 2 motif. The short motif at 451–455 (PVVKI) is the PXVXL/I motif element. A D-box 3 motif is present at residues 457-465 (RLSLSPKKN). The residue at position 507 (Ser507) is a Phosphoserine; by NEK2.

Belongs to the shugoshin family. As to quaternary structure, interacts with PPP2CA (or PPP2CB), PPP2R1B, PPP2R5A, PPP2R5B, PPP2R5C, PPP2R5D, PPP2R5E, SET, LRRC59, RBM10 (or RBM5), RPL10A, RPL28, RPL7, RPL7A and RPLP1. Interaction with protein phosphatase 2A occurs most probably through direct binding to the regulatory B56 subunits: PPP2R1B, PPP2R5A, PPP2R5B, PPP2R5C, PPP2R5D, PPP2R5E. Interacts with PPP2R1A and NEK2. Isoform 3 interacts with PLK1. Interacts with CDCA8. Post-translationally, ubiquitinated and degraded during mitotic exit by APC/C-Cdh1. Phosphorylation by NEK2 is essential for chromosome congression in mitosis and for the proper attachment of spindle microtubule to the kinetochore. Phosphorylated by PLK1 and AUKRB. Widely expressed. Highly expressed in testis. Expressed in lung, small intestine, breast, liver and placenta. Strongly overexpressed in 90% of breast cancers tested.

The protein localises to the nucleus. It localises to the chromosome. Its subcellular location is the centromere. It is found in the kinetochore. The protein resides in the cytoplasm. The protein localises to the cytoskeleton. It localises to the spindle pole. Its subcellular location is the microtubule organizing center. It is found in the centrosome. The protein resides in the nucleus speckle. Functionally, plays a central role in chromosome cohesion during mitosis by preventing premature dissociation of cohesin complex from centromeres after prophase, when most of cohesin complex dissociates from chromosomes arms. May act by preventing phosphorylation of the STAG2 subunit of cohesin complex at the centromere, ensuring cohesin persistence at centromere until cohesin cleavage by ESPL1/separase at anaphase. Essential for proper chromosome segregation during mitosis and this function requires interaction with PPP2R1A. Its phosphorylated form is necessary for chromosome congression and for the proper attachment of spindle microtubule to the kinetochore. Necessary for kinetochore localization of PLK1 and CENPF. May play a role in the tension sensing mechanism of the spindle-assembly checkpoint by regulating PLK1 kinetochore affinity. Isoform 3 plays a role in maintaining centriole cohesion involved in controlling spindle pole integrity. Involved in centromeric enrichment of AUKRB in prometaphase. The protein is Shugoshin 1 of Homo sapiens (Human).